The sequence spans 495 residues: Carbohydrate oxidase (495 aa).

The first 22 residues, 1–22, serve as a signal peptide directing secretion; the sequence is MRSAFILALGLITASADALVTR. Positions 55–229 constitute an FAD-binding PCMH-type domain; it reads LPYIPTAIAQ…AVWKLATFPA (175 aa). The segment at residues 92-154 is a cross-link (6-(S-cysteinyl)-8alpha-(pros-histidyl)-FAD (His-Cys)); that stretch reads HSYASFGFGG…YGRAISHGTC (63 aa). N-linked (GlcNAc...) asparagine glycosylation is found at Asn-244 and Asn-417.

The protein belongs to the oxygen-dependent FAD-linked oxidoreductase family. FAD serves as cofactor. The FAD cofactor is bound via a bicovalent 6-S-cysteinyl, 8alpha-N1-histidyl FAD linkage.

The protein localises to the secreted. The enzyme catalyses beta-D-glucose + O2 = D-glucono-1,5-lactone + H2O2. It catalyses the reaction D-galactose + O2 = D-galactono-1,5-lactone + H2O2. The catalysed reaction is D-cellobiose + O2 = D-cellobiono-1,5-lactone + H2O2. It carries out the reaction beta-lactose + O2 = lactobiono-1,5-lactone + H2O2. The enzyme catalyses D-maltose + O2 = D-maltobiono-1,5-lactone + H2O2. It catalyses the reaction D-xylose + O2 = D-xylono-1,5-lactone + H2O2. Catalyzes the selective oxidation of C1 hydroxyl moieties on mono-, oligo- and polysaccharides with concomitant reduction of molecular oxygen to hydrogen peroxide. This results in the formation of the corresponding lactones, which typically undergo spontaneous hydrolysis. Carbohydrate oxidase is able to oxidize a variety of substrates including D-glucose, D-galactose, D-xylose, D-maltose, D-cellobiose, and lactose. In addition, among various oligosaccharides, the enzyme preferred tetrameric dextrins, indicating a favorable interaction of four linked glucose units with the substrate binding pocket. This is Carbohydrate oxidase from Microdochium nivale (Pink snow mold).